The following is a 120-amino-acid chain: Fumarate reductase subunit D (120 aa).

Transmembrane regions (helical) follow at residues 25–45 (FAMLTPVTILVLGIMVPLGIL), 57–77 (GFVTSFIGALFTIATLALPMW), and 100–120 (IACYATAFLVSALAIIFVFMI).

This sequence belongs to the FrdD family. As to quaternary structure, part of an enzyme complex containing four subunits: a flavoprotein (FrdA), an iron-sulfur protein (FrdB), and two hydrophobic anchor proteins (FrdC and FrdD).

It localises to the cell inner membrane. Its function is as follows. Anchors the catalytic components of the fumarate reductase complex to the cell membrane, binds quinones. The sequence is that of Fumarate reductase subunit D from Photobacterium profundum (strain SS9).